A 134-amino-acid polypeptide reads, in one-letter code: ATP synthase epsilon chain, chloroplastic (134 aa).

It belongs to the ATPase epsilon chain family. As to quaternary structure, F-type ATPases have 2 components, CF(1) - the catalytic core - and CF(0) - the membrane proton channel. CF(1) has five subunits: alpha(3), beta(3), gamma(1), delta(1), epsilon(1). CF(0) has three main subunits: a, b and c.

It is found in the plastid. It localises to the chloroplast thylakoid membrane. Its function is as follows. Produces ATP from ADP in the presence of a proton gradient across the membrane. The polypeptide is ATP synthase epsilon chain, chloroplastic (Spinacia oleracea (Spinach)).